The sequence spans 361 residues: (S)-coclaurine N-methyltransferase (361 aa).

S-adenosyl-L-methionine-binding residues include Ser101, Gly139, Asn163, Gln167, Asp189, Ile190, and Val205. Residue Cys336 is part of the active site.

It belongs to the CFA/CMAS family. As to quaternary structure, homodimer. Highly expressed in rhizomes. Detected in roots, petioles, flower buds and leaves. Expressed between the developing stele and ground tissues near the root apical meristem, in the immature endodermis, the pericycle and the spokes of developing xylem in the apical region of the root and in the protoderm of leaf primordia in rhizomes.

Its subcellular location is the cytoplasm. It carries out the reaction norreticuline + S-adenosyl-L-methionine = reticuline + S-adenosyl-L-homocysteine + H(+). It catalyses the reaction (S)-coclaurine + S-adenosyl-L-methionine = (S)-N-methylcoclaurine + S-adenosyl-L-homocysteine + H(+). The enzyme catalyses heliamine + S-adenosyl-L-methionine = N-methylheliamine + S-adenosyl-L-homocysteine + H(+). The protein operates within alkaloid biosynthesis. In terms of biological role, involved in the biosynthesis of protoberberine alkaloids. N-methyltransferase with a substrate preference for (R,S)-norreticuline but also active with dimethoxytetrahydroisoquinoline. This is (S)-coclaurine N-methyltransferase from Thalictrum flavum subsp. glaucum (Yellow meadow rue).